We begin with the raw amino-acid sequence, 411 residues long: Tyrosine--tRNA ligase (411 aa).

Position 34 (Y34) interacts with L-tyrosine. Positions 39–48 (CTATSLHIGS) match the 'HIGH' region motif. 2 residues coordinate L-tyrosine: Y171 and Q175. A 'KMSKS' region motif is present at residues 231 to 235 (KMGKT). Residue K234 participates in ATP binding. The 67-residue stretch at 345–411 (ISAYELFHEA…GKKRHILVRV (67 aa)) folds into the S4 RNA-binding domain.

It belongs to the class-I aminoacyl-tRNA synthetase family. TyrS type 1 subfamily. In terms of assembly, homodimer.

It localises to the cytoplasm. The enzyme catalyses tRNA(Tyr) + L-tyrosine + ATP = L-tyrosyl-tRNA(Tyr) + AMP + diphosphate + H(+). Functionally, catalyzes the attachment of tyrosine to tRNA(Tyr) in a two-step reaction: tyrosine is first activated by ATP to form Tyr-AMP and then transferred to the acceptor end of tRNA(Tyr). This is Tyrosine--tRNA ligase from Rickettsia peacockii (strain Rustic).